A 550-amino-acid polypeptide reads, in one-letter code: uncharacterized protein (550 aa).

A signal peptide spans 1–53 (MVVIANKGALWAYYCKRLLNSVTYMMYPLIRKRTMKKLLLIVGLLLACSTVMR). Residues Asn-296 and Asn-518 are each glycosylated (N-linked (GlcNAc...) asparagine).

Its subcellular location is the endoplasmic reticulum. This is an uncharacterized protein from Schizosaccharomyces pombe (strain 972 / ATCC 24843) (Fission yeast).